Consider the following 406-residue polypeptide: Probable endo-xylogalacturonan hydrolase A (406 aa).

An N-terminal signal peptide occupies residues 1-18; it reads MISLNSIFLLSLVGLSRA. A disordered region spans residues 20–49; the sequence is PSRSETSPDRTIKPRAACTPTAGGSSSTDD. PbH1 repeat units lie at residues 183-213, 214-235, 237-257, 266-289, 299-320, and 368-390; these read TSNA…DIGA, STYV…AFKP, ANYV…SVGS, VQNV…KTYP, VKNA…QIQS, and TCDV…ILCG. Asp228 serves as the catalytic Proton donor. Asn244 carries N-linked (GlcNAc...) asparagine glycosylation. His251 is an active-site residue. 3 N-linked (GlcNAc...) asparagine glycosylation sites follow: Asn273, Asn278, and Asn301.

This sequence belongs to the glycosyl hydrolase 28 family.

It is found in the secreted. Functionally, pectinolytic enzyme involved in the degradation of xylogalacturonan (xga), a galacturonan backbone heavily substituted with xylose, and which is one important component of the hairy regions of pectin. Activity requires a galacturonic acid backbone substituted with xylose. The chain is Probable endo-xylogalacturonan hydrolase A (xghA) from Aspergillus oryzae (strain ATCC 42149 / RIB 40) (Yellow koji mold).